The sequence spans 64 residues: Large ribosomal subunit protein uL29 (64 aa).

This sequence belongs to the universal ribosomal protein uL29 family.

The protein is Large ribosomal subunit protein uL29 of Verminephrobacter eiseniae (strain EF01-2).